We begin with the raw amino-acid sequence, 291 residues long: Glycinyltransferase (291 aa).

Glutamate 243 is a catalytic residue.

Belongs to the thymidine aminotransferase family.

It carries out the reaction 5-phosphomethyl-dUMP in DNA + glycine = 5-N(alpha)-glycyl-dTMP in DNA + phosphate. Functionally, transfers glycine to 5-phosphomethyl-2'-deoxyuridine (5-PmdU) to produce 5-Nalpha-glycinylthymidine (Nalpha-GlyT) as a step in the pathway leading to thymidine hypermodifications in the viral genome. As a final result of the pathway of hypermodification, 5-aminoethyl-2'-deoxyuridine (5-NedU) substitutes for about 30% of thymidines in the viral DNA. These modifications probably prevent degradation of viral genome by the host restriction-modification antiviral defense system. In Pseudomonas phage M6, this protein is Glycinyltransferase.